Here is a 498-residue protein sequence, read N- to C-terminus: PHD finger protein 10 (498 aa).

The segment covering 1–10 has biased composition (low complexity); that stretch reads MAAAAGPGAA. The tract at residues 1–62 is disordered; that stretch reads MAAAAGPGAA…SSRSCETSSQ (62 aa). Position 2 is an N-acetylalanine (Ala-2). 3 positions are modified to phosphoserine: Ser-12, Ser-36, and Ser-50. The interval 89-185 is essential to induce neural progenitor proliferation; the sequence is MLQEQVSEYL…HYKEYSQMQQ (97 aa). Positions 89–295 are SAY; that stretch reads MLQEQVSEYL…PPLDPELPAL (207 aa). Residue Lys-241 forms a Glycyl lysine isopeptide (Lys-Gly) (interchain with G-Cter in SUMO2) linkage. Phosphoserine is present on Ser-270. Residues 285 to 296 are compositionally biased toward low complexity; that stretch reads EPPLDPELPALD. Positions 285–368 are disordered; that stretch reads EPPLDPELPA…KRSVLSKSVP (84 aa). An essential to induce neural progenitor proliferation region spans residues 292 to 334; it reads LPALDSDGDSDDGEDGRGDEKRKNKGTSDSSSGNVSEGESPPD. Phosphoserine occurs at positions 297, 301, 327, and 331. Polar residues predominate over residues 318–328; it reads TSDSSSGNVSE. Positions 345 to 359 are enriched in basic and acidic residues; sequence KSKDKAATPRKDGPK. Residues 379-436 form a PHD-type 1; degenerate zinc finger; that stretch reads ICGICLKGKESNKKGKAESLIHCSQCENSGHPSCLDMTMELVSMIKTYPWQCMECKTC. Lys-385 participates in a covalent cross-link: Glycyl lysine isopeptide (Lys-Gly) (interchain with G-Cter in SUMO2). The segment at 438 to 481 adopts a PHD-type 2; degenerate zinc-finger fold; the sequence is ICGQPHHEEEMMFCDMCDRGYHTFCVGLGAIPSGRWICDCCQRA.

Belongs to the SAYP family. In terms of assembly, component of neural progenitors-specific chromatin remodeling complex (npBAF complex) composed of at least, ARID1A/BAF250A or ARID1B/BAF250B, SMARCD1/BAF60A, SMARCD3/BAF60C, SMARCA2/BRM/BAF190B, SMARCA4/BRG1/BAF190A, SMARCB1/BAF47, SMARCC1/BAF155, SMARCE1/BAF57, SMARCC2/BAF170, PHF10/BAF45A, ACTL6A/BAF53A and actin. Interacts with ACTL6A/BAF53A, SMARCA2/BRM/BAF190B, SMARCA4/BRG1/BAF190A and PBRM1/BAF180.

It localises to the nucleus. Functionally, involved in transcription activity regulation by chromatin remodeling. Belongs to the neural progenitors-specific chromatin remodeling complex (npBAF complex) and is required for the proliferation of neural progenitors. During neural development a switch from a stem/progenitor to a post-mitotic chromatin remodeling mechanism occurs as neurons exit the cell cycle and become committed to their adult state. The transition from proliferating neural stem/progenitor cells to post-mitotic neurons requires a switch in subunit composition of the npBAF and nBAF complexes. As neural progenitors exit mitosis and differentiate into neurons, npBAF complexes which contain ACTL6A/BAF53A and PHF10/BAF45A, are exchanged for homologous alternative ACTL6B/BAF53B and DPF1/BAF45B or DPF3/BAF45C subunits in neuron-specific complexes (nBAF). The npBAF complex is essential for the self-renewal/proliferative capacity of the multipotent neural stem cells. The nBAF complex along with CREST plays a role regulating the activity of genes essential for dendrite growth. The sequence is that of PHD finger protein 10 (PHF10) from Homo sapiens (Human).